The following is a 143-amino-acid chain: MTIERTFSIIKPNAVAKNVIGSIFARFESAGFKIVGTKMLHLTVEQARGFYAEHDGKPFFDGLVEFMTSGPIVVSVLESENAVQRHRDLLGATNPANALAGTLRADYADSFTENGTHGSDSVESAAREIAYFFAEGEVCPRTR.

Positions 11, 59, 87, 93, 104, and 114 each coordinate ATP. His117 serves as the catalytic Pros-phosphohistidine intermediate.

The protein belongs to the NDK family. As to quaternary structure, homotetramer. Requires Mg(2+) as cofactor.

The protein localises to the cytoplasm. It catalyses the reaction a 2'-deoxyribonucleoside 5'-diphosphate + ATP = a 2'-deoxyribonucleoside 5'-triphosphate + ADP. The catalysed reaction is a ribonucleoside 5'-diphosphate + ATP = a ribonucleoside 5'-triphosphate + ADP. Its function is as follows. Major role in the synthesis of nucleoside triphosphates other than ATP. The ATP gamma phosphate is transferred to the NDP beta phosphate via a ping-pong mechanism, using a phosphorylated active-site intermediate. The chain is Nucleoside diphosphate kinase from Enterobacter sp. (strain 638).